Reading from the N-terminus, the 507-residue chain is Glucose transporter type 3 (507 aa).

Residues 1 to 26 (MRKGGIQDAEPVEPPQSSRKSGTWFA) form a disordered region. Over 1–53 (MRKGGIQDAEPVEPPQSSRKSGTWFAKRPSEMPERHVERAPVRQKINNVGLYK) the chain is Cytoplasmic. The helical transmembrane segment at 54-74 (ATLYSNIGSFFFGIAVGWSGT) threads the bilayer. The Extracellular portion of the chain corresponds to 75–95 (AERSVMEQHSYSFQPTELQWS). Residues 96–116 (GVCILLTLGAALWCLPMGLMV) traverse the membrane as a helical segment. Over 117–124 (RLLGCRRT) the chain is Cytoplasmic. A helical membrane pass occupies residues 125–145 (ILIQLLPNFLGWFLTVFARSV). Residues 146 to 152 (PMLYAGR) lie on the Extracellular side of the membrane. The helical transmembrane segment at 153–173 (FFLGMCGGAHCVVVPIYNAEI) threads the bilayer. Residues 174–183 (STTKKRGAMG) are Cytoplasmic-facing. Residues 184 to 204 (VVFEGACICGVIYSFAMSLFL) form a helical membrane-spanning segment. At 205–207 (ELR) the chain is on the extracellular side. Residues 208–228 (IINFVNLGLLALGPLQILMPE) traverse the membrane as a helical segment. At 229–293 (SPAYYVDHGN…YKKVRRSLAR (65 aa)) the chain is on the cytoplasmic side. The chain crosses the membrane as a helical span at residues 294 to 314 (SLAIALLQKLCGALIFIFYGL). At 315–324 (NMLDCLRIRR) the chain is on the extracellular side. The helical transmembrane segment at 325-345 (EFGLILCLGLILGFLACFFLV) threads the bilayer. At 346–351 (DRLGRR) the chain is on the cytoplasmic side. A helical transmembrane segment spans residues 352–372 (PLLIFSSAGIVFVSIYLGLHF). At 373–374 (KV) the chain is on the extracellular side. Residues 375 to 395 (WMTMGLTVMSWIALFCIAIFV) traverse the membrane as a helical segment. Over 396–420 (GCYTAGVGSLTWVLNAELLVRPMRP) the chain is Cytoplasmic. Residues 421-441 (LGCSIVCAFNWLTAFFVICWF) traverse the membrane as a helical segment. The Extracellular portion of the chain corresponds to 442–450 (GSHGVKCQP). Residues 451–471 (YLFLLFAIIASLILLFSLIYI) traverse the membrane as a helical segment. Residues 472–507 (PETKKLSSAKIQQRLGGLINRPAVITFTSSSDSSNA) are Cytoplasmic-facing.

Belongs to the major facilitator superfamily. Sugar transporter (TC 2.A.1.1) family. Glucose transporter subfamily.

It is found in the cell membrane. The protein localises to the perikaryon. The protein resides in the cell projection. Facilitative glucose transporter that can also mediate the uptake of various other monosaccharides across the cell membrane. This Drosophila melanogaster (Fruit fly) protein is Glucose transporter type 3 (Glut3).